The primary structure comprises 489 residues: Cysteine--tRNA ligase (489 aa).

Cys-27 is a Zn(2+) binding site. The 'HIGH' region motif lies at 29–39; it reads VTVYDLCHLGH. Positions 211, 236, and 240 each coordinate Zn(2+). A 'KMSKS' region motif is present at residues 268 to 272; that stretch reads KMSKS. Lys-271 provides a ligand contact to ATP.

It belongs to the class-I aminoacyl-tRNA synthetase family. As to quaternary structure, monomer. Zn(2+) serves as cofactor.

The protein resides in the cytoplasm. It carries out the reaction tRNA(Cys) + L-cysteine + ATP = L-cysteinyl-tRNA(Cys) + AMP + diphosphate. This chain is Cysteine--tRNA ligase, found in Prochlorococcus marinus (strain MIT 9215).